Here is a 56-residue protein sequence, read N- to C-terminus: NNKCDLEFASSECQMRYQDCGEASNCTALIEECKTSLQEECDQASSESSSTTIRPE.

Cystine bridges form between cysteine 4/cysteine 41, cysteine 13/cysteine 33, and cysteine 20/cysteine 26. An N-linked (GlcNAc...) asparagine glycan is attached at asparagine 25.

In terms of tissue distribution, produced by the albumen gland of the egg cordons.

It localises to the secreted. Functionally, water-borne pheromone that attract the marine mollusk Aplysia into breeding aggregations and coordinate male and female reproductive behavior within the aggregation. The protein is Attractin (ATT) of Aplysia depilans (Sea hare).